The sequence spans 235 residues: Exosome complex component Rrp4 (235 aa).

Residues 63 to 137 enclose the S1 motif domain; that stretch reads GDLVIGYVTD…DEYPIILTLK (75 aa). A KH domain is found at 147–203; the sequence is GTVVEITPVKVPRVIGKRGSMLNTLMELGCDIVVGQNGRIWVKCKDPRDEVFLASLI.

Belongs to the RRP4 family. In terms of assembly, component of the archaeal exosome complex. Forms a trimer of Rrp4 and/or Csl4 subunits. The trimer associates with a hexameric ring-like arrangement composed of 3 Rrp41-Rrp42 heterodimers.

The protein resides in the cytoplasm. Its function is as follows. Non-catalytic component of the exosome, which is a complex involved in RNA degradation. Increases the RNA binding and the efficiency of RNA degradation. Confers strong poly(A) specificity to the exosome. This chain is Exosome complex component Rrp4, found in Pyrobaculum aerophilum (strain ATCC 51768 / DSM 7523 / JCM 9630 / CIP 104966 / NBRC 100827 / IM2).